The following is a 288-amino-acid chain: Acetyl-coenzyme A carboxylase carboxyl transferase subunit beta (288 aa).

The CoA carboxyltransferase N-terminal domain maps to 32-288 (LFAKCPACKH…LELHTEVENV (257 aa)). Residues Cys-36, Cys-39, Cys-54, and Cys-57 each contribute to the Zn(2+) site. A C4-type zinc finger spans residues 36–57 (CPACKHTIYQKDLGKNKVCPNC).

The protein belongs to the AccD/PCCB family. As to quaternary structure, acetyl-CoA carboxylase is a heterohexamer composed of biotin carboxyl carrier protein (AccB), biotin carboxylase (AccC) and two subunits each of ACCase subunit alpha (AccA) and ACCase subunit beta (AccD). It depends on Zn(2+) as a cofactor.

The protein resides in the cytoplasm. The enzyme catalyses N(6)-carboxybiotinyl-L-lysyl-[protein] + acetyl-CoA = N(6)-biotinyl-L-lysyl-[protein] + malonyl-CoA. The protein operates within lipid metabolism; malonyl-CoA biosynthesis; malonyl-CoA from acetyl-CoA: step 1/1. Functionally, component of the acetyl coenzyme A carboxylase (ACC) complex. Biotin carboxylase (BC) catalyzes the carboxylation of biotin on its carrier protein (BCCP) and then the CO(2) group is transferred by the transcarboxylase to acetyl-CoA to form malonyl-CoA. In Lactococcus lactis subsp. lactis (strain IL1403) (Streptococcus lactis), this protein is Acetyl-coenzyme A carboxylase carboxyl transferase subunit beta.